A 575-amino-acid chain; its full sequence is Proline--tRNA ligase (575 aa).

It belongs to the class-II aminoacyl-tRNA synthetase family. ProS type 1 subfamily. In terms of assembly, homodimer.

The protein localises to the cytoplasm. The catalysed reaction is tRNA(Pro) + L-proline + ATP = L-prolyl-tRNA(Pro) + AMP + diphosphate. Functionally, catalyzes the attachment of proline to tRNA(Pro) in a two-step reaction: proline is first activated by ATP to form Pro-AMP and then transferred to the acceptor end of tRNA(Pro). As ProRS can inadvertently accommodate and process non-cognate amino acids such as alanine and cysteine, to avoid such errors it has two additional distinct editing activities against alanine. One activity is designated as 'pretransfer' editing and involves the tRNA(Pro)-independent hydrolysis of activated Ala-AMP. The other activity is designated 'posttransfer' editing and involves deacylation of mischarged Ala-tRNA(Pro). The misacylated Cys-tRNA(Pro) is not edited by ProRS. The protein is Proline--tRNA ligase of Heliobacterium modesticaldum (strain ATCC 51547 / Ice1).